We begin with the raw amino-acid sequence, 341 residues long: HTH-type transcriptional repressor PurR (341 aa).

One can recognise an HTH lacI-type domain in the interval 2-56 (ATIKDVAKRANVSTTTVSHVINKTRFVAEETRNAVWAAIKELHYSPSAVARSLKV). The H-T-H motif DNA-binding region spans 4-23 (IKDVAKRANVSTTTVSHVIN). A DNA-binding region spans residues 48 to 56 (SAVARSLKV). Hypoxanthine contacts are provided by Tyr-73, Arg-190, Thr-192, Phe-221, and Asp-275.

As to quaternary structure, homodimer.

Its pathway is purine metabolism; purine nucleotide biosynthesis [regulation]. In terms of biological role, is the main repressor of the genes involved in the de novo synthesis of purine nucleotides, regulating purB, purC, purEK, purF, purHD, purL, purMN and guaBA expression. PurR is allosterically activated to bind its cognate DNA by binding the purine corepressors, hypoxanthine or guanine, thereby effecting transcription repression. The polypeptide is HTH-type transcriptional repressor PurR (Escherichia fergusonii (strain ATCC 35469 / DSM 13698 / CCUG 18766 / IAM 14443 / JCM 21226 / LMG 7866 / NBRC 102419 / NCTC 12128 / CDC 0568-73)).